Here is a 335-residue protein sequence, read N- to C-terminus: Ketol-acid reductoisomerase (NADP(+)) 2 (335 aa).

The region spanning 1–180 (MKTYYEKDAN…GCTRAGVIET (180 aa)) is the KARI N-terminal Rossmann domain. Residues 24-27 (YGSQ), R47, S51, and 81-84 (DEQQ) each bind NADP(+). The active site involves H106. G132 is a binding site for NADP(+). The KARI C-terminal knotted domain occupies 181-326 (TFQEETETDL…AELREMMSWI (146 aa)). Residues D189, E193, E225, and E229 each coordinate Mg(2+). S250 is a substrate binding site.

Belongs to the ketol-acid reductoisomerase family. Mg(2+) is required as a cofactor.

It carries out the reaction (2R)-2,3-dihydroxy-3-methylbutanoate + NADP(+) = (2S)-2-acetolactate + NADPH + H(+). It catalyses the reaction (2R,3R)-2,3-dihydroxy-3-methylpentanoate + NADP(+) = (S)-2-ethyl-2-hydroxy-3-oxobutanoate + NADPH + H(+). Its pathway is amino-acid biosynthesis; L-isoleucine biosynthesis; L-isoleucine from 2-oxobutanoate: step 2/4. It functions in the pathway amino-acid biosynthesis; L-valine biosynthesis; L-valine from pyruvate: step 2/4. Functionally, involved in the biosynthesis of branched-chain amino acids (BCAA). Catalyzes an alkyl-migration followed by a ketol-acid reduction of (S)-2-acetolactate (S2AL) to yield (R)-2,3-dihydroxy-isovalerate. In the isomerase reaction, S2AL is rearranged via a Mg-dependent methyl migration to produce 3-hydroxy-3-methyl-2-ketobutyrate (HMKB). In the reductase reaction, this 2-ketoacid undergoes a metal-dependent reduction by NADPH to yield (R)-2,3-dihydroxy-isovalerate. The sequence is that of Ketol-acid reductoisomerase (NADP(+)) 2 from Bacillus cereus (strain ATCC 10987 / NRS 248).